Here is a 520-residue protein sequence, read N- to C-terminus: 2-isopropylmalate synthase (520 aa).

The region spanning 5 to 268 (VYIFDTTLRD…YTDVNTKEIY (264 aa)) is the Pyruvate carboxyltransferase domain. 4 residues coordinate Mn(2+): aspartate 14, histidine 202, histidine 204, and asparagine 238. Residues 394–520 (KVLHFQVQSG…RQEIREEGTV (127 aa)) form a regulatory domain region.

It belongs to the alpha-IPM synthase/homocitrate synthase family. LeuA type 1 subfamily. As to quaternary structure, homodimer. Requires Mn(2+) as cofactor.

It localises to the cytoplasm. It carries out the reaction 3-methyl-2-oxobutanoate + acetyl-CoA + H2O = (2S)-2-isopropylmalate + CoA + H(+). It functions in the pathway amino-acid biosynthesis; L-leucine biosynthesis; L-leucine from 3-methyl-2-oxobutanoate: step 1/4. Catalyzes the condensation of the acetyl group of acetyl-CoA with 3-methyl-2-oxobutanoate (2-ketoisovalerate) to form 3-carboxy-3-hydroxy-4-methylpentanoate (2-isopropylmalate). The chain is 2-isopropylmalate synthase from Aquifex aeolicus (strain VF5).